Here is a 761-residue protein sequence, read N- to C-terminus: BMP/retinoic acid-inducible neural-specific protein 1 (761 aa).

Residues 1–22 (MNWRLVEFLYLLFIWDHILVQP) form the signal peptide. The 184-residue stretch at 68–251 (RYKIYREFAR…FVQSALSYIM (184 aa)) folds into the MACPF domain. Asparagine 156, asparagine 433, asparagine 443, asparagine 553, asparagine 599, asparagine 631, and asparagine 677 each carry an N-linked (GlcNAc...) asparagine glycan.

Belongs to the BRINP family.

The protein localises to the cytoplasm. Functionally, plays a role in neurogenesis and brain development. May suppress cell cycle progression in postmitotic neurons by inhibiting G1/S transition. This Gallus gallus (Chicken) protein is BMP/retinoic acid-inducible neural-specific protein 1 (BRINP1).